A 395-amino-acid polypeptide reads, in one-letter code: GTPase Obg (395 aa).

Residues 1 to 159 enclose the Obg domain; it reads MQFVDEASII…RNLRFEMKVM (159 aa). Residues 128–147 are disordered; that stretch reads IHFKSSTNRAPRKTTPGTEG. In terms of domain architecture, OBG-type G spans 160-333; it reads ADVGLLGVPN…LVQAAHRWLT (174 aa). GTP-binding positions include 166–173, 191–195, 213–216, 283–286, and 314–316; these read GVPNAGKS, FTTLV, DVPG, NKLD, and SAI. Mg(2+) is bound by residues S173 and T193. Basic and acidic residues predominate over residues 340-368; sequence AEDETAFEHEREMRRRMEDEAVARAEARM. A disordered region spans residues 340 to 395; it reads AEDETAFEHEREMRRRMEDEAVARAEARMSRKRKPAEDDDDDFDEDDYDVEVEYAP. A compositionally biased stretch (acidic residues) spans 376–395; it reads EDDDDDFDEDDYDVEVEYAP.

Belongs to the TRAFAC class OBG-HflX-like GTPase superfamily. OBG GTPase family. In terms of assembly, monomer. Requires Mg(2+) as cofactor.

The protein resides in the cytoplasm. Functionally, an essential GTPase which binds GTP, GDP and possibly (p)ppGpp with moderate affinity, with high nucleotide exchange rates and a fairly low GTP hydrolysis rate. Plays a role in control of the cell cycle, stress response, ribosome biogenesis and in those bacteria that undergo differentiation, in morphogenesis control. The protein is GTPase Obg of Chromohalobacter salexigens (strain ATCC BAA-138 / DSM 3043 / CIP 106854 / NCIMB 13768 / 1H11).